The primary structure comprises 368 residues: Glycolate oxidase 3 (368 aa).

M1 bears the N-acetylmethionine mark. The region spanning 1 to 359 (MEITNVMEYE…SRTHIKTDWD (359 aa)) is the FMN hydroxy acid dehydrogenase domain. Y24 serves as a coordination point for glyoxylate. FMN contacts are provided by residues 77 to 79 (PTA), S106, 127 to 129 (QLY), and T155. Glyoxylate is bound at residue Y129. Glyoxylate is bound at residue R164. FMN contacts are provided by K230 and S252. Residues H254 and R257 each coordinate glyoxylate. Residue H254 is the Proton acceptor of the active site. FMN contacts are provided by residues 285-289 (DGGVR) and 308-309 (GR).

This sequence belongs to the FMN-dependent alpha-hydroxy acid dehydrogenase family. In terms of assembly, homotetramer. FMN is required as a cofactor.

The protein resides in the peroxisome. It carries out the reaction glycolate + O2 = glyoxylate + H2O2. It functions in the pathway photosynthesis; photorespiration; glycine from 2-phosphoglycolate: step 2/3. Catalyzes the oxidation of glycolate to glyoxylate, with a reduction of O2 to H2O2. Is a key enzyme in photorespiration in green plants. The chain is Glycolate oxidase 3 (GLO5) from Arabidopsis thaliana (Mouse-ear cress).